A 117-amino-acid chain; its full sequence is Large ribosomal subunit protein bL19 (117 aa).

It belongs to the bacterial ribosomal protein bL19 family.

In terms of biological role, this protein is located at the 30S-50S ribosomal subunit interface and may play a role in the structure and function of the aminoacyl-tRNA binding site. This Mycoplasmopsis pulmonis (strain UAB CTIP) (Mycoplasma pulmonis) protein is Large ribosomal subunit protein bL19.